A 549-amino-acid polypeptide reads, in one-letter code: MSHGPSPRLAESPQLSKSSLLTILGSPSPERMGPADSLPPTPPSGTPSPGPPPSLPLTAPALLADGDWESREELRLRELEEARARALQMEKTMRWWSDCTANWREKWSKVRAERNRAREEVRQLRQRLDTLTKELAGARRERQEAQGECEARGRELARLRGVHSAADKTHDGPEPEREQEPVRDIGAERPPGSQELDLVESLLKSRPEEPEGCWDACSVAAGGPRVSSGRQDRNRLPWEDTASTEEDASKLTALRLRLDESQKVLLKEREDKLALSKNIEKLEGELSQWKIKYEELSKTKQEMLKQLSILKETHQDELGRMSEDLEDELGARSSMDRKMAELRGEMERLQAENAAEWGRRERLETEKLGLERENKKLRAQVGDLEEALARRRRQNASALDCDLRASQAALFEKNKELADLKHVHGKLKKQFQEKVAELAHANRRVEQHETEVKKLRLRVEELKKELAQAEDELDEAHNQARKLQRSLDEQTEQSENLQVQLEHLQSRLRRQQQNAPLFGKIRSTRFGTEEAGDGASDLDEDEDLQIQVA.

Disordered regions lie at residues 1–61 (MSHG…TAPA), 135–195 (LAGA…GSQE), and 207–248 (PEEP…EEDA). Residues Ser12, Ser26, and Ser28 each carry the phosphoserine modification. Over residues 37–55 (SLPPTPPSGTPSPGPPPSL) the composition is skewed to pro residues. Residues 69–160 (ESREELRLRE…ARGRELARLR (92 aa)) are a coiled coil. Composition is skewed to basic and acidic residues over residues 135–158 (LAGA…ELAR) and 165–187 (AADK…DIGA). Coiled-coil stretches lie at residues 263–398 (KVLL…NASA) and 426–517 (KLKK…NAPL). 2 disordered regions span residues 472-496 (ELDE…QSEN) and 509-549 (RRQQ…IQVA). A compositionally biased stretch (acidic residues) spans 530–549 (EAGDGASDLDEDEDLQIQVA). Ser536 bears the Phosphoserine mark.

The polypeptide is Coiled-coil domain-containing protein 102A (Ccdc102a) (Mus musculus (Mouse)).